We begin with the raw amino-acid sequence, 296 residues long: uncharacterized protein (296 aa).

It to Synechocystis PCC 6803 sll0787 and M.jannaschii MJ0640.

This is an uncharacterized protein from Methanocaldococcus jannaschii (strain ATCC 43067 / DSM 2661 / JAL-1 / JCM 10045 / NBRC 100440) (Methanococcus jannaschii).